The following is a 398-amino-acid chain: uncharacterized protein (398 aa).

The 233-residue stretch at 21–253 (TNFGPTNLII…WQLTSTSEPE (233 aa)) folds into the Radical SAM core domain. [4Fe-4S] cluster is bound by residues cysteine 37, cysteine 41, and cysteine 44.

The protein belongs to the radical SAM superfamily. Anaerobic sulfatase-maturating enzyme family. It depends on [4Fe-4S] cluster as a cofactor.

This is an uncharacterized protein from Synechocystis sp. (strain ATCC 27184 / PCC 6803 / Kazusa).